The sequence spans 302 residues: Nucleotide-binding protein BceJ2315_08000 (302 aa).

Residue Gly-8–Ser-15 coordinates ATP. Asp-57–Ser-60 lines the GTP pocket.

The protein belongs to the RapZ-like family.

Displays ATPase and GTPase activities. This is Nucleotide-binding protein BceJ2315_08000 from Burkholderia cenocepacia (strain ATCC BAA-245 / DSM 16553 / LMG 16656 / NCTC 13227 / J2315 / CF5610) (Burkholderia cepacia (strain J2315)).